The following is a 255-amino-acid chain: uncharacterized protein (255 aa).

The span at 1 to 10 shows a compositional bias: basic residues; that stretch reads MSDSIHRRKV. The disordered stretch occupies residues 1-78; sequence MSDSIHRRKV…SPMRGLPMEE (78 aa). Residues 44 to 61 are compositionally biased toward basic and acidic residues; it reads VFERSFSEPSLNRHRDGQ.

This is an uncharacterized protein from Arabidopsis thaliana (Mouse-ear cress).